We begin with the raw amino-acid sequence, 323 residues long: Prostaglandin F synthase 2 (323 aa).

Residues 20–24 (GFGTY) and D50 contribute to the NADP(+) site. Catalysis depends on Y55, which acts as the Proton donor. Position 117 (H117) interacts with substrate. NADP(+) contacts are provided by residues 166–167 (SN), Q190, 216–221 (YAALGA), and 270–280 (KSFNKKRIKEN).

It belongs to the aldo/keto reductase family. Monomer.

Its subcellular location is the cytoplasm. It catalyses the reaction prostaglandin F2alpha + NADP(+) = prostaglandin D2 + NADPH + H(+). It functions in the pathway lipid metabolism; prostaglandin biosynthesis. Functionally, catalyzes the reduction of PGD(2) and PGH(2) to PGF(2 alpha) and a stereoisomer, respectively. It has a broad substrate specificity and also reduces other carbonyl compounds. In Bos taurus (Bovine), this protein is Prostaglandin F synthase 2.